The following is a 317-amino-acid chain: Melanocyte-stimulating hormone receptor (317 aa).

Over 1–37 (MSVQGPQRRLLGSLNSTSPAAPRLGLAANQTGPRCLE) the chain is Extracellular. Residues Asn15 and Asn29 are each glycosylated (N-linked (GlcNAc...) asparagine). The helical transmembrane segment at 38-63 (VSVPDGLFLSLGLVSVVENVLVVAAI) threads the bilayer. The Cytoplasmic portion of the chain corresponds to 64–72 (AKNRNLHSP). A helical membrane pass occupies residues 73 to 93 (MYYFICCLAVSDLLVSVSSVL). Residues 94 to 118 (ETAVMLLLEAGTLAGRAAVVQQLDD) are Extracellular-facing. The helical transmembrane segment at 119-140 (VIDVLVCGAMVSSLCFLGAIAV) threads the bilayer. At 141 to 163 (DRYISIFYALRYHSIVTLPRAWR) the chain is on the cytoplasmic side. The chain crosses the membrane as a helical span at residues 164-183 (AISAIWVASVLSSTLFIAYY). At 184–191 (DHTAVLLC) the chain is on the extracellular side. A helical membrane pass occupies residues 192–211 (LVSFFVAMLVLMAVLYVHML). Residues 212–240 (ARACQHARGIARLHKRQRPVHQGLGLKGA) lie on the Cytoplasmic side of the membrane. Residues 241 to 266 (ATLTILLGIFFLCWGPFFLHLSLMVL) form a helical membrane-spanning segment. At 267-279 (CPRHPICGCVFKN) the chain is on the extracellular side. Residues 280–300 (FNLFLTLIICNSIVDPLIYAF) form a helical membrane-spanning segment. At 301–317 (RSQELRKTLQEVLLCSW) the chain is on the cytoplasmic side. The S-palmitoyl cysteine moiety is linked to residue Cys315.

The protein belongs to the G-protein coupled receptor 1 family. Interacts with MGRN1, but does not undergo MGRN1-mediated ubiquitination; this interaction competes with GNAS-binding and thus inhibits agonist-induced cAMP production. Interacts with OPN3; the interaction results in a decrease in MC1R-mediated cAMP signaling and ultimately a decrease in melanin production in melanocytes.

It localises to the cell membrane. In terms of biological role, receptor for MSH (alpha, beta and gamma) and ACTH. The activity of this receptor is mediated by G proteins which activate adenylate cyclase. Mediates melanogenesis, the production of eumelanin (black/brown) and phaeomelanin (red/yellow), via regulation of cAMP signaling in melanocytes. The polypeptide is Melanocyte-stimulating hormone receptor (MC1R) (Panthera onca (Jaguar)).